Here is a 747-residue protein sequence, read N- to C-terminus: Cysteine--tRNA ligase, cytoplasmic (747 aa).

The segment at 1 to 26 is disordered; that stretch reads MTESWEQGKGRRTQPPWSAPNTNEQP. Over residues 15–25 the composition is skewed to polar residues; that stretch reads PPWSAPNTNEQ. Cys54 lines the Zn(2+) pocket. L-cysteine is bound at residue Gly55. The 'HIGH' region motif lies at 56–66; it reads PTVYDASHMGH. Thr95 contacts L-cysteine. The 'KIIK' region motif lies at 100–103; the sequence is KIIK. Zn(2+) is bound by residues Cys347, His372, and Glu376. His372 provides a ligand contact to L-cysteine. The short motif at 405–409 is the 'KMSKS' region element; it reads KMSKS. Position 408 (Lys408) interacts with ATP. Residues 651–683 are compositionally biased toward basic and acidic residues; it reads EEKRKAEEEKQRKKEEAARKKQQQEAAKLEKMK. Disordered regions lie at residues 651-685 and 700-721; these read EEKR…MKIS and FDES…GQTK.

It belongs to the class-I aminoacyl-tRNA synthetase family. As to quaternary structure, homodimer. It depends on Zn(2+) as a cofactor.

It localises to the cytoplasm. It carries out the reaction tRNA(Cys) + L-cysteine + ATP = L-cysteinyl-tRNA(Cys) + AMP + diphosphate. Catalyzes the ATP-dependent ligation of cysteine to tRNA(Cys). This Xenopus laevis (African clawed frog) protein is Cysteine--tRNA ligase, cytoplasmic (cars1).